Consider the following 340-residue polypeptide: Biotin synthase (340 aa).

The interval 1 to 21 is disordered; the sequence is MDAASVSFGSGHDLSSQPRHD. A Radical SAM core domain is found at 53–272; that stretch reads NHVETANLLS…IAVARIMMPR (220 aa). Positions 68, 72, and 75 each coordinate [4Fe-4S] cluster. Residues C112, C143, C203, and R276 each coordinate [2Fe-2S] cluster.

It belongs to the radical SAM superfamily. Biotin synthase family. Homodimer. It depends on [4Fe-4S] cluster as a cofactor. Requires [2Fe-2S] cluster as cofactor.

It catalyses the reaction (4R,5S)-dethiobiotin + (sulfur carrier)-SH + 2 reduced [2Fe-2S]-[ferredoxin] + 2 S-adenosyl-L-methionine = (sulfur carrier)-H + biotin + 2 5'-deoxyadenosine + 2 L-methionine + 2 oxidized [2Fe-2S]-[ferredoxin]. Its pathway is cofactor biosynthesis; biotin biosynthesis; biotin from 7,8-diaminononanoate: step 2/2. In terms of biological role, catalyzes the conversion of dethiobiotin (DTB) to biotin by the insertion of a sulfur atom into dethiobiotin via a radical-based mechanism. This chain is Biotin synthase, found in Nitrobacter hamburgensis (strain DSM 10229 / NCIMB 13809 / X14).